A 194-amino-acid polypeptide reads, in one-letter code: Peroxynitrite isomerase 1 (194 aa).

The short motif at Gly-40–Gly-46 is the GXWXGXG element. Lys-157 and His-184 together coordinate heme b.

It belongs to the nitrobindin family. In terms of assembly, homodimer. Heme b is required as a cofactor.

It catalyses the reaction peroxynitrite = nitrate. It participates in nitrogen metabolism. In terms of biological role, heme-binding protein able to scavenge peroxynitrite and to protect free L-tyrosine against peroxynitrite-mediated nitration, by acting as a peroxynitrite isomerase that converts peroxynitrite to nitrate. Therefore, this protein likely plays a role in peroxynitrite sensing and in the detoxification of reactive nitrogen and oxygen species (RNS and ROS, respectively). Is able to bind nitric oxide (NO) in vitro, but may act as a sensor of peroxynitrite levels in vivo. The protein is Peroxynitrite isomerase 1 of Mycobacterium ulcerans (strain Agy99).